Reading from the N-terminus, the 148-residue chain is Myosin light chain 3, skeletal muscle isoform (148 aa).

Thr-1 carries the N-acetylthreonine modification. 2 EF-hand domains span residues Asp-6–Asn-41 and Gly-82–Lys-117.

As to quaternary structure, myosin is a hexamer of 2 heavy chains and 4 light chains.

In Chelon ramada (Thin-lipped grey mullet), this protein is Myosin light chain 3, skeletal muscle isoform.